The primary structure comprises 292 residues: Lyso-ornithine lipid O-acyltransferase (292 aa).

Residues 11 to 31 form a helical membrane-spanning segment; the sequence is GMLLVMVSLVLMPVQILCLWL. A disordered region spans residues 258 to 292; it reads RLRGRSRSAAKGEPAPACSAAPDIPSDAQRSRLAP.

Belongs to the 1-acyl-sn-glycerol-3-phosphate acyltransferase family. OlsA subfamily.

The protein resides in the membrane. The catalysed reaction is a lyso-ornithine lipid + a fatty acyl-[ACP] = an N(2)-[(3R)-3-(acyloxy)acyl]-L-ornithine lipid + holo-[ACP]. The protein operates within lipid metabolism. In terms of biological role, catalyzes the second step in the formation of ornithine lipids, which are phosphorus-free membrane lipids. Uses acyl-acyl carrier protein (acyl-AcpP) as an acyl donor and converts lyso-ornithine lipid (LOL) into ornithine lipid (OL). This Rhizobium meliloti (strain 1021) (Ensifer meliloti) protein is Lyso-ornithine lipid O-acyltransferase.